Here is a 379-residue protein sequence, read N- to C-terminus: Cobalt-precorrin-5B C(1)-methyltransferase (379 aa).

This sequence belongs to the CbiD family.

It carries out the reaction Co-precorrin-5B + S-adenosyl-L-methionine = Co-precorrin-6A + S-adenosyl-L-homocysteine. The protein operates within cofactor biosynthesis; adenosylcobalamin biosynthesis; cob(II)yrinate a,c-diamide from sirohydrochlorin (anaerobic route): step 6/10. In terms of biological role, catalyzes the methylation of C-1 in cobalt-precorrin-5B to form cobalt-precorrin-6A. This Salmonella choleraesuis (strain SC-B67) protein is Cobalt-precorrin-5B C(1)-methyltransferase.